Consider the following 130-residue polypeptide: Transcription antitermination protein NusB (130 aa).

It belongs to the NusB family.

Functionally, involved in transcription antitermination. Required for transcription of ribosomal RNA (rRNA) genes. Binds specifically to the boxA antiterminator sequence of the ribosomal RNA (rrn) operons. This chain is Transcription antitermination protein NusB, found in Bacillus mycoides (strain KBAB4) (Bacillus weihenstephanensis).